A 372-amino-acid chain; its full sequence is tRNA-specific 2-thiouridylase MnmA (372 aa).

Residues 9 to 16 (GMSGGVDS) and Met-35 each bind ATP. Residues 95–97 (NPD) form an interaction with target base in tRNA region. Residue Cys-100 is the Nucleophile of the active site. Cys-100 and Cys-201 are disulfide-bonded. Gly-124 contributes to the ATP binding site. Residues 151 to 153 (KDQ) are interaction with tRNA. Cys-201 serves as the catalytic Cysteine persulfide intermediate. The segment at 317 to 318 (RY) is interaction with tRNA.

This sequence belongs to the MnmA/TRMU family.

It localises to the cytoplasm. It catalyses the reaction S-sulfanyl-L-cysteinyl-[protein] + uridine(34) in tRNA + AH2 + ATP = 2-thiouridine(34) in tRNA + L-cysteinyl-[protein] + A + AMP + diphosphate + H(+). Functionally, catalyzes the 2-thiolation of uridine at the wobble position (U34) of tRNA, leading to the formation of s(2)U34. This Janthinobacterium sp. (strain Marseille) (Minibacterium massiliensis) protein is tRNA-specific 2-thiouridylase MnmA.